A 161-amino-acid polypeptide reads, in one-letter code: Peptidyl-prolyl cis-trans isomerase (161 aa).

Positions 6-160 (FFDIKAGDER…KKIIIEDCGE (155 aa)) constitute a PPIase cyclophilin-type domain.

Belongs to the cyclophilin-type PPIase family. PPIase A subfamily. In terms of tissue distribution, found mainly in the tegument, gut epithelium, and muscle layers. Also found in the interior of the parasite.

The catalysed reaction is [protein]-peptidylproline (omega=180) = [protein]-peptidylproline (omega=0). With respect to regulation, binds cyclosporin A (CsA). CsA mediates some of its effects via an inhibitory action on PPIase. In terms of biological role, PPIases accelerate the folding of proteins. It catalyzes the cis-trans isomerization of proline imidic peptide bonds in oligopeptides. The chain is Peptidyl-prolyl cis-trans isomerase from Schistosoma mansoni (Blood fluke).